The sequence spans 101 residues: Protein PIP-1 (101 aa).

Positions 1–23 (MGKCLLLPLLLVVLSSLLGFPQA) are cleaved as a signal peptide. The 78-residue stretch at 24–101 (LECFQCQRVS…CHDSPFCNKF (78 aa)) folds into the UPAR/Ly6 domain. 5 disulfides stabilise this stretch: Cys26–Cys53, Cys29–Cys38, Cys45–Cys71, Cys75–Cys91, and Cys92–Cys98. Asn84 carries an N-linked (GlcNAc...) asparagine glycan.

The protein resides in the secreted. The chain is Protein PIP-1 from Sus scrofa (Pig).